A 66-amino-acid chain; its full sequence is Large ribosomal subunit protein bL35 (66 aa).

The segment covering 1-16 (MPKMKTHRGAAKRVKR) has biased composition (basic residues). Residues 1-28 (MPKMKTHRGAAKRVKRTGSGQLKRSRAF) are disordered.

The protein belongs to the bacterial ribosomal protein bL35 family.

The polypeptide is Large ribosomal subunit protein bL35 (Staphylococcus epidermidis (strain ATCC 35984 / DSM 28319 / BCRC 17069 / CCUG 31568 / BM 3577 / RP62A)).